A 110-amino-acid polypeptide reads, in one-letter code: UPF0060 membrane protein Ajs_2087 (110 aa).

Transmembrane regions (helical) follow at residues Leu-7–Trp-27, Ser-33–Leu-53, Ala-63–Val-83, and Gly-86–Ala-106.

Belongs to the UPF0060 family.

Its subcellular location is the cell inner membrane. In Acidovorax sp. (strain JS42), this protein is UPF0060 membrane protein Ajs_2087.